Consider the following 884-residue polypeptide: Receptor-like protein 39 (884 aa).

The signal sequence occupies residues 1–24; that stretch reads MSELLFRLNFLLLLLLSCVSLASS. At 25-847 the chain is on the extracellular side; it reads FFSFNDPVVG…EEEEQVLNWK (823 aa). 3 N-linked (GlcNAc...) asparagine glycosylation sites follow: Asn59, Asn71, and Asn92. LRR repeat units lie at residues 98 to 122, 124 to 146, 147 to 170, 171 to 196, 197 to 223, 225 to 245, 246 to 268, 269 to 292, 294 to 318, and 320 to 344; these read FHQL…EFGM, NKLE…SFSN, LSML…VRNL, RKLT…LFEL, HNLA…NLNK, ELLD…ISNL, TQLT…VQNL, TKLS…LFTM, FLSY…SLSS, and LENL…LINL. N-linked (GlcNAc...) asparagine glycosylation occurs at Asn146. Asn190, Asn208, Asn244, and Asn267 each carry an N-linked (GlcNAc...) asparagine glycan. N-linked (GlcNAc...) asparagine glycosylation is found at Asn304 and Asn313. The LRR 11; degenerate repeat unit spans residues 345 to 365; sequence KELHLSFLNTSYPINLKLFSS. Residue Asn353 is glycosylated (N-linked (GlcNAc...) asparagine). LRR repeat units follow at residues 366 to 391, 392 to 413, 414 to 438, 440 to 463, and 464 to 487; these read LKYL…SYIP, STLE…ILKT, LPNL…LWSL, RLSS…ILVN, and SSVR…PLSV. Asn403 is a glycosylation site (N-linked (GlcNAc...) asparagine). The N-linked (GlcNAc...) asparagine glycan is linked to Asn463. One copy of the LRR 17; degenerate repeat lies at 488–507; sequence NYFSARNNRYGGDIPLSICS. LRR repeat units follow at residues 508-529, 530-553, 554-577, 579-601, 602-625, 628-652, 702-725, 726-749, 750-773, and 775-798; these read RRSL…PPCP, SNFL…YYAD, APLR…LLNC, ALQF…LKAL, PKLQ…NQGS, FPEL…FFEN, SSSA…IGLL, KALI…LANL, KKIE…IGTL, and FLAY…QITG. N-linked (GlcNAc...) asparagine glycosylation is present at Asn520. An N-linked (GlcNAc...) asparagine glycan is attached at Asn576. Asn732 carries an N-linked (GlcNAc...) asparagine glycan. Asn780 carries an N-linked (GlcNAc...) asparagine glycan. A helical membrane pass occupies residues 848 to 868; that stretch reads GVGIGYGVGVLLGLAIAQLIA. The Cytoplasmic segment spans residues 869 to 884; that stretch reads SYKPEWLVFLFQSRNH.

This sequence belongs to the RLP family.

Its subcellular location is the cell membrane. This Arabidopsis thaliana (Mouse-ear cress) protein is Receptor-like protein 39.